Consider the following 1001-residue polypeptide: 2-oxoglutarate dehydrogenase E1 component (1001 aa).

This sequence belongs to the alpha-ketoglutarate dehydrogenase family. In terms of assembly, homodimer. Part of the 2-oxoglutarate dehydrogenase (OGDH) complex composed of E1 (2-oxoglutarate dehydrogenase), E2 (dihydrolipoamide succinyltransferase) and E3 (dihydrolipoamide dehydrogenase); the complex contains multiple copies of the three enzymatic components (E1, E2 and E3). Thiamine diphosphate is required as a cofactor.

It catalyses the reaction N(6)-[(R)-lipoyl]-L-lysyl-[protein] + 2-oxoglutarate + H(+) = N(6)-[(R)-S(8)-succinyldihydrolipoyl]-L-lysyl-[protein] + CO2. Its function is as follows. E1 component of the 2-oxoglutarate dehydrogenase (OGDH) complex which catalyzes the decarboxylation of 2-oxoglutarate, the first step in the conversion of 2-oxoglutarate to succinyl-CoA and CO(2). The polypeptide is 2-oxoglutarate dehydrogenase E1 component (Brucella anthropi (strain ATCC 49188 / DSM 6882 / CCUG 24695 / JCM 21032 / LMG 3331 / NBRC 15819 / NCTC 12168 / Alc 37) (Ochrobactrum anthropi)).